The following is a 134-amino-acid chain: Transmembrane protein 100 (134 aa).

Position 15 is a phosphoserine (Ser-15). A run of 2 helical transmembrane segments spans residues Cys-56–Tyr-76 and Ile-84–Ala-104. The residue at position 121 (Ser-121) is a Phosphoserine.

Interacts (via C-terminus) with TRPA1 and TRPV1. Interacts with TASOR.

The protein resides in the cell membrane. It is found in the membrane. It localises to the perikaryon. Its subcellular location is the cytoplasm. The protein localises to the perinuclear region. The protein resides in the endoplasmic reticulum. In terms of biological role, plays a role during embryonic arterial endothelium differentiation and vascular morphogenesis through the ACVRL1 receptor-dependent signaling pathway upon stimulation by bone morphogenetic proteins, such as GDF2/BMP9 and BMP10. Involved in the regulation of nociception, acting as a modulator of the interaction between TRPA1 and TRPV1, two molecular sensors and mediators of pain signals in dorsal root ganglia (DRG) neurons. Mechanistically, it weakens their interaction, thereby releasing the inhibition of TRPA1 by TRPV1 and increasing the single-channel open probability of the TRPA1-TRPV1 complex. This is Transmembrane protein 100 (TMEM100) from Bos taurus (Bovine).